The chain runs to 530 residues: MTGSTVSRQENSPKRPNDSNGEFKRLLVPETSQPEEDELHESPPENQILNVEEDRDKTYDSVPPFSWAKLWKFTGPGFLMSIAFLDPGNIEGDLQAGAVAGYSLLWLLLWATLMGLLMQLLSARIGVATGRHLAEICRSEYPSWARILLWFMAEVALIGADIQEVIGSAIALQILTRGFLPIWVGVIITSFDCFLISYLEKCGMRKLEGLFAVLIATMALSFAWMFNETKPSVEELFIGIIIPKLGSKTIREAVGVVGCVITPHNVFLHSALVQSRKTDPKEINRVQEALNYYTIESSAALFVSFMINLFVTAVFAKGFYGTKQADSIGLVNAGYYLQEKYGGGVFPILYIWGIGLLAAGQSSTITGTYAGQFIMEGFLDLQMEQWLSAFITRSFAIVPTMFVAIMFNTSEGSLDVLNEWLNILQSMQIPFAVIPLLTMVSNEHIMGVFKIGPSLEKLAWTVAVFVMMINGYLLLDFFMAEVEGFLVGFLVFGGVVGYISFIIYLVSYRSSQSSSWSSLEMSERVVSTET.

Over residues 1–10 (MTGSTVSRQE) the composition is skewed to polar residues. The interval 1 to 53 (MTGSTVSRQENSPKRPNDSNGEFKRLLVPETSQPEEDELHESPPENQILNVEE) is disordered. Over residues 11–27 (NSPKRPNDSNGEFKRLL) the composition is skewed to basic and acidic residues. 12 helical membrane passes run 65 to 85 (FSWA…IAFL), 98 to 118 (AVAG…GLLM), 147 to 167 (ILLW…EVIG), 179 to 199 (FLPI…ISYL), 207 to 227 (LEGL…WMFN), 253 to 273 (AVGV…SALV), 299 to 319 (AALF…AKGF), 341 to 361 (YGGG…AAGQ), 387 to 407 (LSAF…AIMF), 429 to 449 (IPFA…MGVF), 458 to 478 (LAWT…LDFF), and 485 to 505 (FLVG…IIYL).

The protein belongs to the NRAMP (TC 2.A.55) family.

The protein resides in the membrane. Functionally, seems to be involved in iron uptake. The sequence is that of Metal transporter Nramp5 (NRAMP5) from Arabidopsis thaliana (Mouse-ear cress).